We begin with the raw amino-acid sequence, 166 residues long: UBA-like domain-containing protein 2-A (166 aa).

The tract at residues 120-166 is disordered; it reads QQPVWLPPASPTTHLHHHHHHPQPVWPPNSQPTGGPQKAMAAMDGQR.

The protein belongs to the UBALD family.

This Xenopus laevis (African clawed frog) protein is UBA-like domain-containing protein 2-A (ubald2-a).